A 490-amino-acid polypeptide reads, in one-letter code: ATP synthase subunit beta, chloroplastic (490 aa).

170–177 (GGAGVGKT) lines the ATP pocket.

Belongs to the ATPase alpha/beta chains family. As to quaternary structure, F-type ATPases have 2 components, CF(1) - the catalytic core - and CF(0) - the membrane proton channel. CF(1) has five subunits: alpha(3), beta(3), gamma(1), delta(1), epsilon(1). CF(0) has four main subunits: a(1), b(1), b'(1) and c(9-12).

It is found in the plastid. The protein resides in the chloroplast thylakoid membrane. It catalyses the reaction ATP + H2O + 4 H(+)(in) = ADP + phosphate + 5 H(+)(out). Its function is as follows. Produces ATP from ADP in the presence of a proton gradient across the membrane. The catalytic sites are hosted primarily by the beta subunits. This Calystegia sepium (Hedge bindweed) protein is ATP synthase subunit beta, chloroplastic.